A 690-amino-acid polypeptide reads, in one-letter code: ATP-dependent DNA helicase Hel308 (690 aa).

Residues Gln-26 and 45–52 (IPTASGKT) contribute to the ATP site. Residues 32-188 (AGYLESEDNY…WLDARVVEHD (157 aa)) enclose the Helicase ATP-binding domain. The short motif at 133–136 (DEFH) is the DEAH box element. The Helicase C-terminal domain maps to 208–417 (EKNDVVLKVL…NRDALYRQII (210 aa)).

Belongs to the helicase family. Hel308 subfamily. As to quaternary structure, monomer. Binds replication protein A (RPA), in presence and absence of DNA.

The enzyme catalyses Couples ATP hydrolysis with the unwinding of duplex DNA by translocating in the 3'-5' direction.. It catalyses the reaction ATP + H2O = ADP + phosphate + H(+). Functionally, DNA-dependent ATPase and 3'-5' DNA helicase that may be involved in repair of stalled replication forks. Helicase with 3'-to 5'- polarity; able to unwind over 100 bp of DNA at 50 degrees Celsius. Unwinds forked DNA, preferentially on lagging strand forks; has weaker activity on Holliday junctions. Displaces the invading strand in DNA D-loops. Unwinds short oligonucleotides from dsDNA with 3'- but not blunt ends or 5'-ssDNA tails in an ATP-dependent manner. ATPase activity is stimulated by ssDNA but not dsDNA, protein binds ssDNA, dsDNA with 5'- or 3'-overhangs but not blunt ended dsDNA and replication forks. Replication forks bind both this protein and RPA. RPA does not stimulate the helicase activity of this protein. The polypeptide is ATP-dependent DNA helicase Hel308 (Methanothermobacter thermautotrophicus (strain ATCC 29096 / DSM 1053 / JCM 10044 / NBRC 100330 / Delta H) (Methanobacterium thermoautotrophicum)).